The following is a 266-amino-acid chain: Energy-coupling factor transporter transmembrane protein EcfT 1 (266 aa).

The next 5 helical transmembrane spans lie at 33–53, 73–93, 107–127, 152–172, and 243–263; these read IGILFLANNWWTYALMVLFTL, LIWLILFTVVMQILFASGGTI, LLNGVFVFLRFVLIIIMSTVI, VPVNDIALMISVALRFIPTLM, and HFGDLIAACVMILLTAGLVIL.

The protein belongs to the energy-coupling factor EcfT family. In terms of assembly, forms a stable energy-coupling factor (ECF) transporter complex composed of 2 membrane-embedded substrate-binding proteins (S component), 2 ATP-binding proteins (A component) and 2 transmembrane proteins (T component). May be able to interact with more than 1 S component at a time.

It is found in the cell membrane. Transmembrane (T) component of an energy-coupling factor (ECF) ABC-transporter complex. Unlike classic ABC transporters this ECF transporter provides the energy necessary to transport a number of different substrates. The polypeptide is Energy-coupling factor transporter transmembrane protein EcfT 1 (Listeria monocytogenes serotype 1/2a (strain 08-5578)).